A 493-amino-acid chain; its full sequence is Probable cytochrome P450 508A2 (493 aa).

A helical transmembrane segment spans residues 1–21 (MIFGIIVYLFLIYILHNAYSK). Cys-439 lines the heme pocket.

This sequence belongs to the cytochrome P450 family. Heme is required as a cofactor.

It localises to the membrane. This Dictyostelium discoideum (Social amoeba) protein is Probable cytochrome P450 508A2 (cyp508A2-1).